We begin with the raw amino-acid sequence, 660 residues long: DNA polymerase alpha-associated DNA helicase A (660 aa).

Residue 232–239 coordinates ATP; it reads GPPGTGKT.

This sequence belongs to the DNA2/NAM7 helicase family. As to quaternary structure, associates with the hexameric DNA polymerase alpha.

The protein resides in the cytoplasm. The protein localises to the nucleus. The catalysed reaction is ATP + H2O = ADP + phosphate + H(+). DNA polymerase alpha-associated DNA helicase which may be involved in DNA replication. The sequence is that of DNA polymerase alpha-associated DNA helicase A (hcs1) from Schizosaccharomyces pombe (strain 972 / ATCC 24843) (Fission yeast).